The primary structure comprises 602 residues: Elongation factor 4 (602 aa).

The tr-type G domain occupies lysine 6 to arginine 188. GTP-binding positions include aspartate 18–threonine 23 and asparagine 135–aspartate 138.

This sequence belongs to the TRAFAC class translation factor GTPase superfamily. Classic translation factor GTPase family. LepA subfamily.

It localises to the cell membrane. It carries out the reaction GTP + H2O = GDP + phosphate + H(+). Functionally, required for accurate and efficient protein synthesis under certain stress conditions. May act as a fidelity factor of the translation reaction, by catalyzing a one-codon backward translocation of tRNAs on improperly translocated ribosomes. Back-translocation proceeds from a post-translocation (POST) complex to a pre-translocation (PRE) complex, thus giving elongation factor G a second chance to translocate the tRNAs correctly. Binds to ribosomes in a GTP-dependent manner. The sequence is that of Elongation factor 4 from Moorella thermoacetica (strain ATCC 39073 / JCM 9320).